A 186-amino-acid polypeptide reads, in one-letter code: RNA-free ribonuclease P (186 aa).

This sequence belongs to the HARP family.

It carries out the reaction Endonucleolytic cleavage of RNA, removing 5'-extranucleotides from tRNA precursor.. RNA-free RNase P that catalyzes the removal of the 5'-leader sequence from pre-tRNA to produce the mature 5'-terminus. This chain is RNA-free ribonuclease P, found in Hydrogenobaculum sp. (strain Y04AAS1).